The sequence spans 423 residues: tRNA(Ile)-lysidine synthase (423 aa).

27 to 32 is an ATP binding site; that stretch reads SGGVDS.

This sequence belongs to the tRNA(Ile)-lysidine synthase family.

Its subcellular location is the cytoplasm. It carries out the reaction cytidine(34) in tRNA(Ile2) + L-lysine + ATP = lysidine(34) in tRNA(Ile2) + AMP + diphosphate + H(+). Ligates lysine onto the cytidine present at position 34 of the AUA codon-specific tRNA(Ile) that contains the anticodon CAU, in an ATP-dependent manner. Cytidine is converted to lysidine, thus changing the amino acid specificity of the tRNA from methionine to isoleucine. In Streptococcus mutans serotype c (strain ATCC 700610 / UA159), this protein is tRNA(Ile)-lysidine synthase.